Reading from the N-terminus, the 182-residue chain is Small ribosomal subunit protein uS5 (182 aa).

The region spanning 16 to 79 (FVDRLVHINR…ESAKRGMIYV (64 aa)) is the S5 DRBM domain.

Belongs to the universal ribosomal protein uS5 family. In terms of assembly, part of the 30S ribosomal subunit. Contacts proteins S4 and S8.

With S4 and S12 plays an important role in translational accuracy. Its function is as follows. Located at the back of the 30S subunit body where it stabilizes the conformation of the head with respect to the body. This chain is Small ribosomal subunit protein uS5, found in Bartonella henselae (strain ATCC 49882 / DSM 28221 / CCUG 30454 / Houston 1) (Rochalimaea henselae).